The sequence spans 340 residues: Dihydroorotate dehydrogenase (quinone) (340 aa).

FMN-binding positions include 61–65 (AGLDK) and T85. Substrate is bound at residue K65. Residue 110–114 (NRMGF) participates in substrate binding. FMN is bound by residues N138 and N171. N171 is a substrate binding site. S174 acts as the Nucleophile in catalysis. N176 contacts substrate. FMN contacts are provided by K216 and T244. Residue 245-246 (NT) coordinates substrate. Residues G267, G296, and 317-318 (YS) each bind FMN.

The protein belongs to the dihydroorotate dehydrogenase family. Type 2 subfamily. In terms of assembly, monomer. It depends on FMN as a cofactor.

It localises to the cell membrane. The catalysed reaction is (S)-dihydroorotate + a quinone = orotate + a quinol. It functions in the pathway pyrimidine metabolism; UMP biosynthesis via de novo pathway; orotate from (S)-dihydroorotate (quinone route): step 1/1. Functionally, catalyzes the conversion of dihydroorotate to orotate with quinone as electron acceptor. This chain is Dihydroorotate dehydrogenase (quinone), found in Pseudomonas putida (strain ATCC 47054 / DSM 6125 / CFBP 8728 / NCIMB 11950 / KT2440).